Consider the following 324-residue polypeptide: Cuticle collagen lon-3 (324 aa).

Residues 1 to 30 form the signal peptide; the sequence is MSVTTATSGALIFSGASLLVSLFAAASIYS. The interval 119–324 is disordered; that stretch reads VENTCPTGPD…AWRRKHKRVY (206 aa). 3 triple-helical region regions span residues 129–152, 170–229, and 235–294; these read GEEG…DGQD, GLPG…KGDD, and GRQG…SGLP. Low complexity-rich tracts occupy residues 136-151, 168-181, 210-223, 235-246, and 261-273; these read PDGQ…FDGQ, PQGL…QGAP, PTGA…PGAS, GRQGQRGQPGEQ, and EGPP…VGVP. Residues 296 to 311 show a composition bias toward basic and acidic residues; that stretch reads KDAEYCKCPTRDDGGN. A compositionally biased stretch (basic residues) spans 314–324; sequence RAWRRKHKRVY.

It belongs to the cuticular collagen family. In terms of assembly, collagen polypeptide chains are complexed within the cuticle by disulfide bonds and other types of covalent cross-links.

Its function is as follows. Nematode cuticles are composed largely of collagen-like proteins. The cuticle functions both as an exoskeleton and as a barrier to protect the worm from its environment. Dose-dependent regulator of body length and shape. This is Cuticle collagen lon-3 (lon-3) from Caenorhabditis elegans.